We begin with the raw amino-acid sequence, 294 residues long: tRNA pseudouridine synthase B (294 aa).

Residue Asp-39 is the Nucleophile of the active site.

Belongs to the pseudouridine synthase TruB family. Type 1 subfamily.

It carries out the reaction uridine(55) in tRNA = pseudouridine(55) in tRNA. Functionally, responsible for synthesis of pseudouridine from uracil-55 in the psi GC loop of transfer RNAs. The chain is tRNA pseudouridine synthase B from Streptococcus pyogenes serotype M6 (strain ATCC BAA-946 / MGAS10394).